The chain runs to 460 residues: Cytochrome P450 CYP71D312 (460 aa).

Position 398 (Cys-398) interacts with heme.

The protein belongs to the cytochrome P450 family. Heme serves as cofactor.

Its function is as follows. Probable heme-thiolate monooxygenase. In Panax ginseng (Korean ginseng), this protein is Cytochrome P450 CYP71D312.